The following is a 403-amino-acid chain: Argininosuccinate synthase (403 aa).

ATP contacts are provided by residues 10-18 and Ala38; that span reads AYSGGVDTS. Tyr89 contacts L-citrulline. ATP is bound at residue Gly119. The L-aspartate site is built by Thr121, Asn125, and Asp126. Asn125 contributes to the L-citrulline binding site. Residues Arg129, Ser177, Ser186, Glu262, and Tyr274 each coordinate L-citrulline.

The protein belongs to the argininosuccinate synthase family. Type 1 subfamily. As to quaternary structure, homotetramer.

It is found in the cytoplasm. It catalyses the reaction L-citrulline + L-aspartate + ATP = 2-(N(omega)-L-arginino)succinate + AMP + diphosphate + H(+). Its pathway is amino-acid biosynthesis; L-arginine biosynthesis; L-arginine from L-ornithine and carbamoyl phosphate: step 2/3. This is Argininosuccinate synthase from Synechococcus sp. (strain CC9902).